The following is a 295-amino-acid chain: Small ribosomal subunit protein uS2 (295 aa).

Residues 260 to 295 (KQAKKFSKTKNIDEETNTEFEQALNDADENKNSDNA) are disordered.

It belongs to the universal ribosomal protein uS2 family.

This Rickettsia felis (strain ATCC VR-1525 / URRWXCal2) (Rickettsia azadi) protein is Small ribosomal subunit protein uS2.